We begin with the raw amino-acid sequence, 98 residues long: MPGITREEVAHLARLARLELKPEELEHFAGQLDDIIGAVARVSEVADQDVPPTSHPLPLTNVMRPDEVRPSLTPEQALSGAPAQEQQRFKVPQILGEE.

The disordered stretch occupies residues 47–98 (DQDVPPTSHPLPLTNVMRPDEVRPSLTPEQALSGAPAQEQQRFKVPQILGEE).

Belongs to the GatC family. Heterotrimer of A, B and C subunits.

It carries out the reaction L-glutamyl-tRNA(Gln) + L-glutamine + ATP + H2O = L-glutaminyl-tRNA(Gln) + L-glutamate + ADP + phosphate + H(+). It catalyses the reaction L-aspartyl-tRNA(Asn) + L-glutamine + ATP + H2O = L-asparaginyl-tRNA(Asn) + L-glutamate + ADP + phosphate + 2 H(+). Allows the formation of correctly charged Asn-tRNA(Asn) or Gln-tRNA(Gln) through the transamidation of misacylated Asp-tRNA(Asn) or Glu-tRNA(Gln) in organisms which lack either or both of asparaginyl-tRNA or glutaminyl-tRNA synthetases. The reaction takes place in the presence of glutamine and ATP through an activated phospho-Asp-tRNA(Asn) or phospho-Glu-tRNA(Gln). The protein is Glutamyl-tRNA(Gln) amidotransferase subunit C (gatC) of Streptomyces coelicolor (strain ATCC BAA-471 / A3(2) / M145).